The chain runs to 196 residues: Small ribosomal subunit protein uS4c (196 aa).

Positions 15-42 (LGALPGLTRKTPKSGSNQKKKFNSGKKE) are disordered. Residues 89 to 150 (MRLDNILFRL…NQRSKRLVQN (62 aa)) enclose the S4 RNA-binding domain.

The protein belongs to the universal ribosomal protein uS4 family. Part of the 30S ribosomal subunit. Contacts protein S5. The interaction surface between S4 and S5 is involved in control of translational fidelity.

It is found in the plastid. It localises to the chloroplast. In terms of biological role, one of the primary rRNA binding proteins, it binds directly to 16S rRNA where it nucleates assembly of the body of the 30S subunit. With S5 and S12 plays an important role in translational accuracy. The chain is Small ribosomal subunit protein uS4c (rps4) from Cenchrus longisetus (Feathertop).